A 69-amino-acid polypeptide reads, in one-letter code: Mitotic-spindle organizing protein 1 (69 aa).

This sequence belongs to the MOZART1 family. Part of the gamma-tubulin complex.

The protein resides in the cytoplasm. It is found in the cytoskeleton. The protein localises to the microtubule organizing center. It localises to the spindle. Required for gamma-tubulin complex recruitment to the microtubule organizing centers (MTOCs). The sequence is that of Mitotic-spindle organizing protein 1 from Picea sitchensis (Sitka spruce).